The primary structure comprises 154 residues: Ribosome maturation factor RimP (154 aa).

This sequence belongs to the RimP family.

It localises to the cytoplasm. Its function is as follows. Required for maturation of 30S ribosomal subunits. This Carboxydothermus hydrogenoformans (strain ATCC BAA-161 / DSM 6008 / Z-2901) protein is Ribosome maturation factor RimP.